Here is a 320-residue protein sequence, read N- to C-terminus: Ferrochelatase (320 aa).

The Fe cation site is built by His-194 and Glu-275.

This sequence belongs to the ferrochelatase family. In terms of assembly, monomer.

It localises to the cytoplasm. It carries out the reaction heme b + 2 H(+) = protoporphyrin IX + Fe(2+). The protein operates within porphyrin-containing compound metabolism; protoheme biosynthesis; protoheme from protoporphyrin-IX: step 1/1. Its function is as follows. Catalyzes the ferrous insertion into protoporphyrin IX. The polypeptide is Ferrochelatase (Escherichia coli (strain SMS-3-5 / SECEC)).